Consider the following 563-residue polypeptide: Type 2 DNA topoisomerase 6 subunit B (563 aa).

ATP-binding positions include asparagine 46, aspartate 78, threonine 99–lysine 100, glycine 109–serine 116, and lysine 471.

This sequence belongs to the TOP6B family. Homodimer. Heterotetramer of two Top6A and two Top6B chains.

The enzyme catalyses ATP-dependent breakage, passage and rejoining of double-stranded DNA.. Functionally, relaxes both positive and negative superturns and exhibits a strong decatenase activity. This chain is Type 2 DNA topoisomerase 6 subunit B, found in Thermococcus onnurineus (strain NA1).